The sequence spans 1293 residues: DNA-directed RNA polymerase subunit beta' (1293 aa).

4 residues coordinate Zn(2+): C60, C62, C75, and C78. Mg(2+)-binding residues include D535, D537, and D539. Zn(2+) is bound by residues C877, C953, C960, and C963.

It belongs to the RNA polymerase beta' chain family. As to quaternary structure, the RNAP catalytic core consists of 2 alpha, 1 beta, 1 beta' and 1 omega subunit. When a sigma factor is associated with the core the holoenzyme is formed, which can initiate transcription. Mg(2+) serves as cofactor. The cofactor is Zn(2+).

It catalyses the reaction RNA(n) + a ribonucleoside 5'-triphosphate = RNA(n+1) + diphosphate. Its function is as follows. DNA-dependent RNA polymerase catalyzes the transcription of DNA into RNA using the four ribonucleoside triphosphates as substrates. This chain is DNA-directed RNA polymerase subunit beta', found in Kineococcus radiotolerans (strain ATCC BAA-149 / DSM 14245 / SRS30216).